Consider the following 873-residue polypeptide: Bifunctional heparan sulfate N-deacetylase/N-sulfotransferase 3 (873 aa).

Over 1–13 (MSFIMKPHRHFQR) the chain is Cytoplasmic. The chain crosses the membrane as a helical; Signal-anchor for type II membrane protein span at residues 14 to 34 (TLILLATFCMVSIIISAYYLY). At 35-873 (SGYKQESEVS…WLRQELQKVR (839 aa)) the chain is on the lumenal side. A heparan sulfate N-deacetylase 3 region spans residues 36 to 589 (GYKQESEVSG…KRHRDIWSKE (554 aa)). 4 N-linked (GlcNAc...) asparagine glycosylation sites follow: N146, N226, N342, and N392. The heparan sulfate N-sulfotransferase 3 stretch occupies residues 590-873 (KTCDRLPKFL…WLRQELQKVR (284 aa)). Residue K605 is the For sulfotransferase activity of the active site. 605–609 (KTGTT) serves as a coordination point for 3'-phosphoadenylyl sulfate. N658 is a glycosylation site (N-linked (GlcNAc...) asparagine). Position 703 (S703) interacts with 3'-phosphoadenylyl sulfate. N794 is a glycosylation site (N-linked (GlcNAc...) asparagine). A disulfide bond links C809 and C819. 824-828 (KGRKY) serves as a coordination point for 3'-phosphoadenylyl sulfate.

This sequence belongs to the sulfotransferase 1 family. NDST subfamily. Monomer. As to expression, strongly expressed strongly in brain. Expressed at high level at embryonic day 11 compared to other stages of development. Weakly expressed in adult heart, kidney, muscle, endothelial cells and testis but not in other tissues.

It localises to the golgi apparatus membrane. It carries out the reaction alpha-D-glucosaminyl-[heparan sulfate](n) + 3'-phosphoadenylyl sulfate = N-sulfo-alpha-D-glucosaminyl-[heparan sulfate](n) + adenosine 3',5'-bisphosphate + 2 H(+). It participates in glycan metabolism; heparan sulfate biosynthesis. Its pathway is glycan metabolism; heparin biosynthesis. Essential bifunctional enzyme that catalyzes both the N-deacetylation and the N-sulfation of glucosamine (GlcNAc) of the glycosaminoglycan in heparan sulfate. Modifies the GlcNAc-GlcA disaccharide repeating sugar backbone to make N-sulfated heparosan, a prerequisite substrate for later modifications in heparin biosynthesis. Has high deacetylase activity but low sulfotransferase activity. This Mus musculus (Mouse) protein is Bifunctional heparan sulfate N-deacetylase/N-sulfotransferase 3 (Ndst3).